We begin with the raw amino-acid sequence, 232 residues long: Flagellar L-ring protein (232 aa).

An N-terminal signal peptide occupies residues 1-21 (MQKNAAHTYAISSLLVLSLTG). Residue Cys-22 is the site of N-palmitoyl cysteine attachment. Cys-22 carries S-diacylglycerol cysteine lipidation.

It belongs to the FlgH family. As to quaternary structure, the basal body constitutes a major portion of the flagellar organelle and consists of four rings (L,P,S, and M) mounted on a central rod.

Its subcellular location is the cell outer membrane. The protein resides in the bacterial flagellum basal body. Its function is as follows. Assembles around the rod to form the L-ring and probably protects the motor/basal body from shearing forces during rotation. The polypeptide is Flagellar L-ring protein (Escherichia coli O6:H1 (strain CFT073 / ATCC 700928 / UPEC)).